The primary structure comprises 232 residues: Phosphatidylserine decarboxylase proenzyme (232 aa).

Ser190 (schiff-base intermediate with substrate; via pyruvic acid) is an active-site residue. Ser190 bears the Pyruvic acid (Ser); by autocatalysis mark.

Belongs to the phosphatidylserine decarboxylase family. PSD-A subfamily. As to quaternary structure, heterodimer of a large membrane-associated beta subunit and a small pyruvoyl-containing alpha subunit. Pyruvate is required as a cofactor. In terms of processing, is synthesized initially as an inactive proenzyme. Formation of the active enzyme involves a self-maturation process in which the active site pyruvoyl group is generated from an internal serine residue via an autocatalytic post-translational modification. Two non-identical subunits are generated from the proenzyme in this reaction, and the pyruvate is formed at the N-terminus of the alpha chain, which is derived from the carboxyl end of the proenzyme. The post-translation cleavage follows an unusual pathway, termed non-hydrolytic serinolysis, in which the side chain hydroxyl group of the serine supplies its oxygen atom to form the C-terminus of the beta chain, while the remainder of the serine residue undergoes an oxidative deamination to produce ammonia and the pyruvoyl prosthetic group on the alpha chain.

Its subcellular location is the cell membrane. It catalyses the reaction a 1,2-diacyl-sn-glycero-3-phospho-L-serine + H(+) = a 1,2-diacyl-sn-glycero-3-phosphoethanolamine + CO2. Its pathway is phospholipid metabolism; phosphatidylethanolamine biosynthesis; phosphatidylethanolamine from CDP-diacylglycerol: step 2/2. Its function is as follows. Catalyzes the formation of phosphatidylethanolamine (PtdEtn) from phosphatidylserine (PtdSer). The protein is Phosphatidylserine decarboxylase proenzyme of Rhodopseudomonas palustris (strain ATCC BAA-98 / CGA009).